The primary structure comprises 263 residues: HLA class II histocompatibility antigen, DM beta chain (263 aa).

The signal sequence occupies residues 1–18 (MITFLPLLLGLSLGCTGA). A beta-1 region spans residues 19–112 (GGFVAHVEST…PFWGSLTNRT (94 aa)). Residues 19–218 (GGFVAHVEST…PGLSPMQTLK (200 aa)) are Lumenal-facing. Cystine bridges form between Cys29-Cys97 and Cys43-Cys53. Asn110 carries an N-linked (GlcNAc...) asparagine glycan. Positions 113–207 (RPPSVQVAKT…GAPEPILRDW (95 aa)) are beta-2. The region spanning 114–208 (PPSVQVAKTT…APEPILRDWT (95 aa)) is the Ig-like C1-type domain. A disulfide bridge connects residues Cys135 and Cys192. The segment at 208 to 218 (TPGLSPMQTLK) is connecting peptide. Residues 219-239 (VSVSAVTLGLGLIIFSLGVIS) form a helical membrane-spanning segment. The Cytoplasmic segment spans residues 240–263 (WRRAGHSSYTPLPGSNYSEGWHIS). Residues 248-251 (YTPL) carry the YXXZ motif motif.

Belongs to the MHC class II family. As to quaternary structure, heterodimer of an alpha chain (DMA) and a beta chain (DMB). Interacts with MHCII; this interaction mediates rapid selection of high-affinity peptides in a pH-dependent manner, with an optimum at pH 5.5.

It localises to the late endosome membrane. Its subcellular location is the lysosome membrane. Its function is as follows. Plays a critical role in catalyzing the release of class II-associated invariant chain peptide (CLIP) from newly synthesized MHC class II molecules and freeing the peptide binding site for acquisition of antigenic peptides. In B-cells, the interaction between HLA-DM and MHC class II molecules is regulated by HLA-DO. The chain is HLA class II histocompatibility antigen, DM beta chain (HLA-DMB) from Homo sapiens (Human).